The following is a 354-amino-acid chain: MGCTLSAEDKAAVERSKMIDRNLREDGEKAAKEVKLLLLGAGESGKSTIVKQMKIIHEDGYSEDECKQYKVVVYSNTIQSIIAIIRAMGRLKIDFGESARADDARQLFVLAGSAEEGVMTSELAGVIKRLWRDGGVQACFSRSREYQLNDSASYYLNDLDRISQTNYIPTQQDVLRTRVKTTGIVETHFTFKELYFKMFDVGGQRSERKKWIHCFEGVTAIIFCVALSDYDLVLAEDEEMNRMHESMKLFDSICNNKWFTDTSIILFLNKKDLFEEKIKRSPLTICYPEYTGSNTYEEAAAYIQCQFEDLNRRKDTKEVYTHFTCATDTKNVQFVFDAVTDVIIKNNLKECGLY.

A lipid anchor (N-myristoyl glycine) is attached at glycine 2. The S-palmitoyl cysteine moiety is linked to residue cysteine 3. In terms of domain architecture, G-alpha spans 32–354 (KEVKLLLLGA…KNNLKECGLY (323 aa)). Positions 35–48 (KLLLLGAGESGKST) are G1 motif. Positions 42, 43, 44, 45, 46, 47, 48, 150, 151, 175, 176, 177, 178, 179, 180, 181, 201, 203, 269, 270, 272, 273, 325, 326, and 327 each coordinate GTP. Residue serine 47 participates in Mg(2+) binding. The tract at residues 173-181 (DVLRTRVKT) is G2 motif. Threonine 181 contributes to the Mg(2+) binding site. Residues 196–205 (FKMFDVGGQR) form a G3 motif region. The G4 motif stretch occupies residues 265–272 (ILFLNKKD). Residues 324-329 (TCATDT) are G5 motif.

Belongs to the G-alpha family. G(i/o/t/z) subfamily. In terms of assembly, heterotrimeric G proteins are composed of 3 units; alpha, beta and gamma. The alpha subunit contains the guanine nucleotide binding site. GTP binding causes dissociation of the heterotrimer, liberating the individual subunits so that they can interact with downstream effector proteins. Forms a complex with CCDC88A/GIV and EGFR which leads to enhanced EGFR signaling and triggering of cell migration; ligand stimulation is required for recruitment of GNAI3 to the complex. Interacts (inactive GDP-bound form) with CCDC88A/GIV (via GBA motif); the interaction leads to activation of GNAI3. Interacts (inactive GDP-bound form) with CCDC88C/DAPLE (via GBA motif); the interaction leads to activation of GNAI3. Interacts (inactive GDP-bound form) with NUCB1 (via GBA motif) and NUCB2 (via GBA motif); the interaction leads to activation of GNAI3. Interacts (inactive GDP-bound form) with PLCD4 (via GBA motif); the interaction leads to activation of GNAI3. Interacts with INSR; the interaction is probably mediated by CCDC88A/GIV. Interacts with GPSM1. Interacts (GDP-bound form) with GPSM2 (via GoLoco domains). Does not interact with RGS2. Interacts with RGS8 and RGS10; this strongly enhances the intrinsic GTPase activity. Interacts with RGS16; this strongly enhances the intrinsic GTPase activity. Interacts with RGS12. Interacts (via active GTP- or inactive GDP-bound form) with RGS14. Interacts (via active GTP-bound form) with TRPC5 (via ANK repeats) in a homotetrameric ion channel; the interaction is direct and activates the channel activity.

It localises to the cytoplasm. It is found in the cell membrane. The protein localises to the cytoskeleton. Its subcellular location is the microtubule organizing center. The protein resides in the centrosome. In terms of biological role, heterotrimeric guanine nucleotide-binding proteins (G proteins) function as transducers downstream of G protein-coupled receptors (GPCRs) in numerous signaling cascades. The alpha chain contains the guanine nucleotide binding site and alternates between an active, GTP-bound state and an inactive, GDP-bound state. Signaling by an activated GPCR promotes GDP release and GTP binding. The alpha subunit has a low GTPase activity that converts bound GTP to GDP, thereby terminating the signal. Both GDP release and GTP hydrolysis are modulated by numerous regulatory proteins. Signaling is mediated via effector proteins, such as adenylate cyclase. Inhibits adenylate cyclase activity, leading to decreased intracellular cAMP levels. Stimulates the activity of receptor-regulated K(+) channels. The active GTP-bound form prevents the association of RGS14 with centrosomes and is required for the translocation of RGS14 from the cytoplasm to the plasma membrane. May play a role in cell division. The active GTP-bound form activates the calcium permeant TRPC5 ion channels. This is Guanine nucleotide-binding protein G(i) subunit alpha-3 (Gnai3) from Mus musculus (Mouse).